Consider the following 442-residue polypeptide: MGVTGGLVRSIFFRNKSFGAHDYNNGRGNLGEKKRWSSVRSYLCGDEFNSVRAVNDSESIKDSEALLTMSQQLSSEFGMPFGSVIAIEDSASVRHLEDEDSGSVKSSEATVTQPLLEEKSKGLDCYLKEEDVEDNQSEATETHIPKKHQTTPISKLFLEEDAAVIIQSAFRSYLAIRRSKEEEETFAKEESFSGEESQDNASMGTSLEAQTGNSVKAPFFRRKRVSANRRTLQKNNTQVLRIKEDWDDSTVSSTISKSRIQSRVEAMTKRERALAYAFSQQLRICSKKKQIDRSSEDDSNIGWSWLERWMATRVPDSIPIEPRTDVATKNQSLIRKNRAFGTAGELESCASNDLPLHFESISETQGDATTVLQTEKSSFKPSISKRKSVPSYKSQRKHHKLQATKSDLQQQTKKAKKAKTTPTSCKTGNECEETSHKLNSST.

The IQ domain occupies 159-188; that stretch reads EEDAAVIIQSAFRSYLAIRRSKEEEETFAK. The disordered stretch occupies residues 184-212; it reads ETFAKEESFSGEESQDNASMGTSLEAQTG. Residues 199-212 are compositionally biased toward polar residues; sequence DNASMGTSLEAQTG. The interval 270–282 is calmodulin-binding; sequence RERALAYAFSQQL. The disordered stretch occupies residues 375-442; that stretch reads EKSSFKPSIS…ETSHKLNSST (68 aa). Residues 383–402 are compositionally biased toward basic residues; that stretch reads ISKRKSVPSYKSQRKHHKLQ. Residues 385–392 carry the Nuclear localization signal motif; that stretch reads KRKSVPSY.

The protein belongs to the IQD family. In terms of assembly, binds to multiple calmodulin (CaM) in the presence of Ca(2+) and CaM-like proteins.

The protein resides in the nucleus. May be involved in cooperative interactions with calmodulins or calmodulin-like proteins. Recruits calmodulin proteins to microtubules, thus being a potential scaffold in cellular signaling and trafficking. May associate with nucleic acids and regulate gene expression at the transcriptional or post-transcriptional level. This Arabidopsis thaliana (Mouse-ear cress) protein is Protein IQ-DOMAIN 33.